The chain runs to 219 residues: Response regulator ArlR (219 aa).

The Response regulatory domain maps to 3–116 (QILIVEDEQN…ELLARIRAIL (114 aa)). The residue at position 52 (Asp52) is a 4-aspartylphosphate. Positions 122 to 219 (KDIIDVNGIT…TVRGVGYVIR (98 aa)) form a DNA-binding region, ompR/PhoB-type.

Post-translationally, phosphorylated by ArlS.

Its subcellular location is the cytoplasm. Functionally, member of the two-component regulatory system ArlS/ArlR involved in the regulation of adhesion, autolysis, multidrug resistance and virulence. The chain is Response regulator ArlR (arlR) from Staphylococcus aureus (strain USA300).